A 299-amino-acid polypeptide reads, in one-letter code: Tyrosine recombinase XerC (299 aa).

The Core-binding (CB) domain maps to 3–87 (PQCQSYLQQF…AIKQWGEFLL (85 aa)). Residues 108-287 (PLPKNIDVDS…DFQHLAKVYD (180 aa)) form the Tyr recombinase domain. Active-site residues include Arg-147, Lys-171, His-239, Arg-242, and His-265. Tyr-274 serves as the catalytic O-(3'-phospho-DNA)-tyrosine intermediate.

Belongs to the 'phage' integrase family. XerC subfamily. As to quaternary structure, forms a cyclic heterotetrameric complex composed of two molecules of XerC and two molecules of XerD.

The protein localises to the cytoplasm. Site-specific tyrosine recombinase, which acts by catalyzing the cutting and rejoining of the recombining DNA molecules. The XerC-XerD complex is essential to convert dimers of the bacterial chromosome into monomers to permit their segregation at cell division. It also contributes to the segregational stability of plasmids. This Shewanella sp. (strain ANA-3) protein is Tyrosine recombinase XerC.